Here is a 376-residue protein sequence, read N- to C-terminus: Queuine tRNA-ribosyltransferase (376 aa).

Asp89 serves as the catalytic Proton acceptor. Substrate is bound by residues 89 to 93 (DSGGF), Asp143, Gln194, and Gly221. Residues 252–258 (GVGTPAN) are RNA binding. Residue Asp271 is the Nucleophile of the active site. Cys309, Cys311, Cys314, and His340 together coordinate Zn(2+).

The protein belongs to the queuine tRNA-ribosyltransferase family. As to quaternary structure, homodimer. Within each dimer, one monomer is responsible for RNA recognition and catalysis, while the other monomer binds to the replacement base PreQ1. It depends on Zn(2+) as a cofactor.

It catalyses the reaction 7-aminomethyl-7-carbaguanine + guanosine(34) in tRNA = 7-aminomethyl-7-carbaguanosine(34) in tRNA + guanine. Its pathway is tRNA modification; tRNA-queuosine biosynthesis. Its function is as follows. Catalyzes the base-exchange of a guanine (G) residue with the queuine precursor 7-aminomethyl-7-deazaguanine (PreQ1) at position 34 (anticodon wobble position) in tRNAs with GU(N) anticodons (tRNA-Asp, -Asn, -His and -Tyr). Catalysis occurs through a double-displacement mechanism. The nucleophile active site attacks the C1' of nucleotide 34 to detach the guanine base from the RNA, forming a covalent enzyme-RNA intermediate. The proton acceptor active site deprotonates the incoming PreQ1, allowing a nucleophilic attack on the C1' of the ribose to form the product. After dissociation, two additional enzymatic reactions on the tRNA convert PreQ1 to queuine (Q), resulting in the hypermodified nucleoside queuosine (7-(((4,5-cis-dihydroxy-2-cyclopenten-1-yl)amino)methyl)-7-deazaguanosine). The protein is Queuine tRNA-ribosyltransferase of Clostridium kluyveri (strain NBRC 12016).